A 296-amino-acid polypeptide reads, in one-letter code: Acetylglutamate kinase (296 aa).

Residues 69–70, arginine 91, and asparagine 192 contribute to the substrate site; that span reads GG.

It belongs to the acetylglutamate kinase family. ArgB subfamily.

The protein resides in the cytoplasm. The enzyme catalyses N-acetyl-L-glutamate + ATP = N-acetyl-L-glutamyl 5-phosphate + ADP. It functions in the pathway amino-acid biosynthesis; L-arginine biosynthesis; N(2)-acetyl-L-ornithine from L-glutamate: step 2/4. Its function is as follows. Catalyzes the ATP-dependent phosphorylation of N-acetyl-L-glutamate. The protein is Acetylglutamate kinase of Ruthia magnifica subsp. Calyptogena magnifica.